A 445-amino-acid polypeptide reads, in one-letter code: Exodeoxyribonuclease 7 large subunit (445 aa).

The protein belongs to the XseA family. As to quaternary structure, heterooligomer composed of large and small subunits.

The protein localises to the cytoplasm. It carries out the reaction Exonucleolytic cleavage in either 5'- to 3'- or 3'- to 5'-direction to yield nucleoside 5'-phosphates.. Its function is as follows. Bidirectionally degrades single-stranded DNA into large acid-insoluble oligonucleotides, which are then degraded further into small acid-soluble oligonucleotides. This chain is Exodeoxyribonuclease 7 large subunit, found in Staphylococcus aureus (strain USA300 / TCH1516).